A 1969-amino-acid polypeptide reads, in one-letter code: MTLGIFANCIFCLKVKYLPRQQKKKLQTDIKENGGKFSFLLNPQCTHVIVDSADVLSRCHLNSIQKNDVQIANPAFIQDSVRQRRLLDVRNYDPLSPAPAAPPAERSRSEVQSEYLPSDNTPEKENTEVTEVSAENVEIPPFLQDFEVVKYNILEKVGGPETVVVELQSSQDPESCPFVITAHFLLADQKTRRESTGKQTSEGAIEYYESYVEDLKRQGFLLQEHFTAEATQLASEKLQALLLEEVISSGALSQEVSDLLEVIWTEALGHLENTLLKPVNSMSLNDVSKAEGILLLVKTALKNGDSPGQLQKTMAEFYRLLPHRHPASEEVNLRLLAQKEDLCQLVRDMVNVCETNLSKPNPPSLAKYRALRCKIEHVDQNTEEFSRVRKEVLQNNRSEQPVDILQIFRVGRVNEATEFLSKLGNVRLLFHGSPVRNILGILSRGLLLPKVAEDRGVQRTDVGNLGSGIYFSDSLSTSIKYAHAGETDGSRLLVVCDVALGKCVNLFKKDFSLTEAPPGYDSVHGVSETTSVPTDFQDDEFVVYKTNQVKMKYIVKFCTPGDQIKEFHPHENTEVEEQRAEPSSVPEAGDFQLPDIKPFTNIKAGLQDASANPVPLDSVHIKGRVIDFVAQVIVFQTYTNQSHVPIEAKYIFPLDDKAAVCGFEAFINGKHIVGEIKEKEEARQEYREAVSQGHGAYLMDQDTPDVFTVSVGNLPPRAKVLIKITYITELSIQSPVAIFFIPGTVAPWQQDKALNENLQDTVETIRIKEIGAEQSFSLAMSIEMPYMIEFISSDTHELRQKSTDCKAVVSTVEGSSLDSGGFSLHIGLRDAYLPRMWVEKHPEKESEACMLVFQPELADVLPDLRGKNEVIICLDCSSSMEGVTFTQAKQVALYALSLLGEEQKVNIMQFGTGYKELFSYPKCITDSKMATEFIMSAAPSMGNTDFWKVLRYLSLLYPSEGFRNILLISDGHLQSESLTLQLVKRNIQHTRVFTCAVGSTANRHILRTLSQCGAGVFEYFNSKSKHSWKKQIEAQMTRIRSPSCHSVSVKWQQLSRDAPEPLQAPAWVPSLFHNDRLLVYGFIPHCTQATLQAFIQEKEFCTMVSTTELQKTTGTMIHKLAARALIRDYEDGILHDDETNHEMKKNIMKSLIIELSKENSLITQFTSFVAVEKRDVNEIPFANVPNISELVAKEDVDFLPYVSWQEKQPEASISQTEIDSSRLKHNKLSDGHGVLQPVSVSSEVNEKPSLLLAAKKRKIKTIKKCSLDISEDFEDRTAVAQSPATAQSLNFHLPLSVRPQLKAVEQQLHGNRLEPKQRGGFRKLLMAKKCRNVPDSLVSSAPAVTAEFSYLSACSSSSAFLSPLCDIPSSLPPHPLGGTHPPPPLPLPDGTHLPSPLFGSTHPPPPLFGGTLIPPPSSLFGGTHLPPPPPLPGGTHIPPPPPIPGGTLIPPSSSLFGGTHLPPPPLLSAGTHIPPPPLLSAGTHLPPPPLLPAGTHIPPPPPITGSTHPPPPSSLFGGTHLPPPPPLPGGTHIPPPPPIPGGTLIPSPSSLFGGTHLPPPPLLPAGTHIPPPPPITGSTHPPPPSSLFGGTHLPPPPPAGTQFSLSPIGFIPPKLGPPKLSHSHKLVGDTNIHDSEPPLLGFKDLCSRDMGFSCGTAFSGSFASSKDFDPGKFSQGPNNISFSPKAPEMGVLHQSPFCSPPKPPSAPPLVTNVLCSEAPQSYFLNLQSAAVHQSPNNRVSEIIMESVESSLPSDYSSRDASSYLALEGAEDSLLGGSSFETDTDEAAAFIANDLLTSIETSSDEECAFCDEDQESPVPWASLFALQTENGFWKLTPELGLILNLNVNALLTSLEEKGIRSLGTKGRERLLDLIATLLVLQFLYTKLEQEGMVAKSLIKMDDAFISRNIPWAFENIKKAREWARKTEGQYPSICQRLELGKDWESATKQLLGIQPQANTSLHRILYYSQG.

In terms of domain architecture, BRCT spans 1–94 (MTLGIFANCI…RLLDVRNYDP (94 aa)). The short motif at 19 to 25 (PRQQKKK) is the Nuclear localization signal element. The disordered stretch occupies residues 92-132 (YDPLSPAPAAPPAERSRSEVQSEYLPSDNTPEKENTEVTEV). The 129-residue stretch at 235–363 (SEKLQALLLE…ETNLSKPNPP (129 aa)) folds into the PARP alpha-helical domain. The 205-residue stretch at 362–566 (PPSLAKYRAL…FCTPGDQIKE (205 aa)) folds into the PARP catalytic domain. In terms of domain architecture, VIT spans 600-728 (TNIKAGLQDA…KVLIKITYIT (129 aa)). Positions 869-1039 (EVIICLDCSS…KQIEAQMTRI (171 aa)) constitute a VWFA domain. Serine 1229 carries the post-translational modification Phosphoserine. Positions 1230–1242 (DGHGVLQPVSVSS) match the Nuclear localization signal motif. 5 stretches are compositionally biased toward pro residues: residues 1372–1387 (PPHP…PLPL), 1402–1417 (HPPP…PPPS), 1425–1444 (LPPP…PPIP), 1485–1513 (LPPP…PPPS), and 1521–1540 (LPPP…PPIP). Residues 1372–1608 (PPHPLGGTHP…AGTQFSLSPI (237 aa)) form a disordered region. An FH1 domain is found at 1443–1541 (IPGGTLIPPS…HIPPPPPIPG (99 aa)). Residues 1541 to 1556 (GGTLIPSPSSLFGGTH) show a composition bias toward low complexity. Positions 1557-1585 (LPPPPLLPAGTHIPPPPPITGSTHPPPPS) are enriched in pro residues. Residues 1808–1969 (FCDEDQESPV…LHRILYYSQG (162 aa)) form an interaction with the major vault protein region.

Belongs to the ARTD/PARP family. Component of the vault ribonucleoprotein particle, at least composed of MVP, PARP4 and one or more vault RNAs (vRNAs). Interacts with TEP1.

The protein localises to the cytoplasm. It is found in the nucleus. The catalysed reaction is L-aspartyl-[protein] + NAD(+) = 4-O-(ADP-D-ribosyl)-L-aspartyl-[protein] + nicotinamide. It catalyses the reaction L-glutamyl-[protein] + NAD(+) = 5-O-(ADP-D-ribosyl)-L-glutamyl-[protein] + nicotinamide. Its function is as follows. Mono-ADP-ribosyltransferase that mediates mono-ADP-ribosylation of target proteins. The polypeptide is Protein mono-ADP-ribosyltransferase PARP4 (Mus musculus (Mouse)).